The sequence spans 64 residues: Small ribosomal subunit protein eS17 (64 aa).

Belongs to the eukaryotic ribosomal protein eS17 family.

In Methanosarcina barkeri (strain Fusaro / DSM 804), this protein is Small ribosomal subunit protein eS17.